The chain runs to 471 residues: DnaJ protein P58IPK homolog B (471 aa).

A signal peptide spans 1-24 (MARWPWRWRVLLPLLLLHSSPVFA). TPR repeat units follow at residues 32–65 (PSTLFKRASEMMNLRKYDGSLGLLNAVLEVDPNH), 66–99 (SEAYRQRASVLRHKCRYKEAEGDYSKYLELKPGS), 112–146 (AQNALESAYGQFESHDFSKVLEYINKIVLVFSPNC), 148–180 (KAKLLKAKALLALEDYSSVISETGFILKEDEDN), 181–214 (LDALLLRGRAYYYLADHDVASRHYQKGLRLDPEH), 227–260 (LLKKTKSAEDNAAKGKLRVSAEDYKAALAMDPDH), 265–298 (VHLYLGLCKVLVKLGRGKEAISSCTEALNIDGEL), and 300–332 (DALTQRGEAKLLTEDWEGAVQDLKEASQKSPQD). N64 carries an N-linked (GlcNAc...) asparagine glycan. One can recognise a J domain in the interval 353-419 (DWYKILGISK…DKRVRYDRGE (67 aa)).

In terms of assembly, interacts with BIP1.

The protein resides in the endoplasmic reticulum lumen. May play a role in protein folding in the endoplasmic reticulum. The polypeptide is DnaJ protein P58IPK homolog B (Oryza sativa subsp. japonica (Rice)).